Consider the following 578-residue polypeptide: Moesin/ezrin/radixin homolog 1 (578 aa).

Residues 1 to 296 (MSPKALNVRV…GNHELYMRRR (296 aa)) form the FERM domain. Residues 463–555 (ASTTPQHHHV…HRENVRQGRD (93 aa)) are disordered. Acidic residues predominate over residues 475 to 484 (DENENEEELT). Over residues 492–555 (VSRDLDTDEH…HRENVRQGRD (64 aa)) the composition is skewed to basic and acidic residues. Thr-559 carries the post-translational modification Phosphothreonine.

Interacts with wgn. Interacts with Mer and arm at the adherens junction. Interacts with cytoskeletal actin at apical buds of microvilli in the precellularised embryo. Interacts with PCID2 (possibly via FERM domain). In terms of processing, phosphorylated on Thr-559. In the oocyte this phosphorylation is induced by phosphatidylinositol 4,5-bisphosphate (PtdIns[4,5]P(2)) generated by sktl.

It localises to the cell junction. It is found in the adherens junction. Its subcellular location is the cell projection. The protein resides in the microvillus. The protein localises to the rhabdomere. It localises to the cell membrane. It is found in the cytoplasm. Its subcellular location is the cytoskeleton. The protein resides in the cell cortex. The protein localises to the cilium. It localises to the flagellum. It is found in the nucleus. Its subcellular location is the nucleoplasm. The protein resides in the chromosome. Its function is as follows. Involved in connections of major cytoskeletal structures to the plasma membrane. Together with wgn, involved in control of axon targeting of R8 and R2-R5 photoreceptors, independent of egr. In the nucleus, recruited to sites of active transcription by RNA polymerase II where it has a role in nuclear mRNA export together with the mRNA export factor PCID2 and other messenger ribonucleoprotein (mRNP) particles. This chain is Moesin/ezrin/radixin homolog 1 (Moe), found in Drosophila melanogaster (Fruit fly).